The chain runs to 298 residues: N-acetylmuramic acid 6-phosphate etherase (298 aa).

The 164-residue stretch at 55–218 (IHAQVSGGGR…STGLMIKSGK (164 aa)) folds into the SIS domain. Glutamate 83 functions as the Proton donor in the catalytic mechanism. Residue glutamate 114 is part of the active site.

The protein belongs to the GCKR-like family. MurNAc-6-P etherase subfamily. Homodimer.

The catalysed reaction is N-acetyl-D-muramate 6-phosphate + H2O = N-acetyl-D-glucosamine 6-phosphate + (R)-lactate. It participates in amino-sugar metabolism; 1,6-anhydro-N-acetylmuramate degradation. It functions in the pathway amino-sugar metabolism; N-acetylmuramate degradation. The protein operates within cell wall biogenesis; peptidoglycan recycling. In terms of biological role, specifically catalyzes the cleavage of the D-lactyl ether substituent of MurNAc 6-phosphate, producing GlcNAc 6-phosphate and D-lactate. Together with AnmK, is also required for the utilization of anhydro-N-acetylmuramic acid (anhMurNAc) either imported from the medium or derived from its own cell wall murein, and thus plays a role in cell wall recycling. This chain is N-acetylmuramic acid 6-phosphate etherase, found in Shigella dysenteriae serotype 1 (strain Sd197).